A 290-amino-acid chain; its full sequence is Protease HtpX (290 aa).

2 helical membrane-spanning segments follow: residues Ile12–Ala32 and Ala42–Ser62. His147 provides a ligand contact to Zn(2+). Residue Glu148 is part of the active site. His151 contacts Zn(2+). Helical transmembrane passes span Leu162–Val182 and Phe197–Met217. Glu224 contacts Zn(2+).

This sequence belongs to the peptidase M48B family. It depends on Zn(2+) as a cofactor.

The protein localises to the cell inner membrane. The sequence is that of Protease HtpX from Pseudoalteromonas atlantica (strain T6c / ATCC BAA-1087).